Reading from the N-terminus, the 407-residue chain is Phosphonoacetate hydrolase (407 aa).

Residues Asp-25, Thr-64, Asp-202, His-206, Asp-241, His-242, and His-368 each contribute to the Zn(2+) site. The substrate site is built by Thr-64 and Asp-202. Positions 242 and 368 each coordinate substrate.

Belongs to the alkaline phosphatase family. PhnA subfamily. In terms of assembly, homodimer. Zn(2+) is required as a cofactor.

The enzyme catalyses phosphonoacetate + H2O = acetate + phosphate + H(+). Specifically hydrolyzes phosphonoacetate. Does not have activity on other organophosphonates or acetates. The protein is Phosphonoacetate hydrolase of Pseudomonas cedrina.